Reading from the N-terminus, the 295-residue chain is Glutamyl-Q tRNA(Asp) synthetase (295 aa).

Residues 9–13 and E45 contribute to the L-glutamate site; that span reads RFAPT. Positions 12–22 match the 'HIGH' region motif; it reads PTPSGFLHFGS. The Zn(2+) site is built by C101, C103, Y115, and C119. Positions 172 and 190 each coordinate L-glutamate. The 'KMSKS' region signature appears at 228 to 232; that stretch reads KLGKS. K231 serves as a coordination point for ATP.

Belongs to the class-I aminoacyl-tRNA synthetase family. GluQ subfamily. Requires Zn(2+) as cofactor.

Functionally, catalyzes the tRNA-independent activation of glutamate in presence of ATP and the subsequent transfer of glutamate onto a tRNA(Asp). Glutamate is transferred on the 2-amino-5-(4,5-dihydroxy-2-cyclopenten-1-yl) moiety of the queuosine in the wobble position of the QUC anticodon. The polypeptide is Glutamyl-Q tRNA(Asp) synthetase (Pseudomonas entomophila (strain L48)).